Reading from the N-terminus, the 303-residue chain is Archaeosortase A (303 aa).

7 helical membrane passes run 3–23, 36–56, 60–80, 93–113, 169–189, 200–220, and 259–279; these read GLLS…GAVA, TAAW…FTLV, YIEG…GWLL, AVAA…FTLL, VVLA…IAAV, LAIA…FIAI, and LAVV…PELL. Cys173 (acyl-thioester intermediate) is an active-site residue. Arg214 serves as the catalytic Proton donor.

It belongs to the exosortase/archaeosortase family. Archaeosortase A subfamily.

The protein resides in the cell membrane. Transpeptidase that recognizes and modifies its substrate by proteolytic cleavage of a sorting signal. Following cleavage, a covalent intermediate is formed via a thioester bond between the archaeosortase and its substrate, which is then transferred and covalently attached to the cell membrane. This sortase recognizes a tripartite structure consisting of a conserved Pro-Gly-Phe (PGF) motif, followed by a transmembrane alpha helix domain and a cluster of basic residues, usually at the C-terminus of target proteins. Confirmed substrates include the cell surface S-layer glycoprotein Csg and HVO_0405. ArtA is required for the C-terminal processing of Csg and for its lipidation and attachment to the archaeal plasma membrane. It is also required for the processing of HVO_0405, which contains an atypical central tripartite structure. This is Archaeosortase A from Haloferax volcanii (strain ATCC 29605 / DSM 3757 / JCM 8879 / NBRC 14742 / NCIMB 2012 / VKM B-1768 / DS2) (Halobacterium volcanii).